A 477-amino-acid chain; its full sequence is UDP-N-acetylmuramate--L-alanine ligase (477 aa).

117–123 lines the ATP pocket; that stretch reads GTHGKTT.

This sequence belongs to the MurCDEF family.

The protein resides in the cytoplasm. It carries out the reaction UDP-N-acetyl-alpha-D-muramate + L-alanine + ATP = UDP-N-acetyl-alpha-D-muramoyl-L-alanine + ADP + phosphate + H(+). It participates in cell wall biogenesis; peptidoglycan biosynthesis. Functionally, cell wall formation. The sequence is that of UDP-N-acetylmuramate--L-alanine ligase from Phenylobacterium zucineum (strain HLK1).